We begin with the raw amino-acid sequence, 559 residues long: DDB1- and CUL4-associated factor 10 (559 aa).

A disordered region spans residues 1 to 119; the sequence is MFPFGPHSPG…HGLGAGLGGP (119 aa). Phosphoserine is present on residues Ser53, Ser63, Ser89, and Ser92. Positions 56–86 are enriched in low complexity; it reads RPGAPSLSPAPRSGELGLPGAPESSTASAPG. The span at 87–97 shows a compositional bias: pro residues; that stretch reads EPSPPSPPCRR. Position 134 is an omega-N-methylarginine (Arg134). WD repeat units lie at residues 166 to 205, 209 to 247, 251 to 290, and 296 to 335; these read RTHG…HIKT, AHED…TKVC, GHTS…EDGC, and FHTR…KSLE. Ser349 bears the Phosphoserine mark. Residues 350 to 367 show a composition bias toward low complexity; that stretch reads SSDLTTSSSSSGPRVSGS. The segment at 350–396 is disordered; the sequence is SSDLTTSSSSSGPRVSGSPCHHSDSNSSEKHMSRASQREGVSPRNSL. Residues 370-381 are compositionally biased toward basic and acidic residues; the sequence is HHSDSNSSEKHM. WD repeat units lie at residues 408-448, 470-508, and 526-559; these read DHGN…QEGA, VGRG…SELV, and SHND…QPKF.

The protein belongs to the WD repeat DCAF10 family. In terms of assembly, interacts with DDB1.

It functions in the pathway protein modification; protein ubiquitination. Functionally, may function as a substrate receptor for CUL4-DDB1 E3 ubiquitin-protein ligase complex. This is DDB1- and CUL4-associated factor 10 (DCAF10) from Homo sapiens (Human).